The sequence spans 468 residues: Proline--tRNA ligase (468 aa).

It belongs to the class-II aminoacyl-tRNA synthetase family. ProS type 3 subfamily. As to quaternary structure, homodimer.

Its subcellular location is the cytoplasm. It catalyses the reaction tRNA(Pro) + L-proline + ATP = L-prolyl-tRNA(Pro) + AMP + diphosphate. Functionally, catalyzes the attachment of proline to tRNA(Pro) in a two-step reaction: proline is first activated by ATP to form Pro-AMP and then transferred to the acceptor end of tRNA(Pro). In Frankia casuarinae (strain DSM 45818 / CECT 9043 / HFP020203 / CcI3), this protein is Proline--tRNA ligase.